Reading from the N-terminus, the 404-residue chain is ATP phosphoribosyltransferase regulatory subunit (404 aa).

This sequence belongs to the class-II aminoacyl-tRNA synthetase family. HisZ subfamily. Heteromultimer composed of HisG and HisZ subunits.

The protein localises to the cytoplasm. It participates in amino-acid biosynthesis; L-histidine biosynthesis; L-histidine from 5-phospho-alpha-D-ribose 1-diphosphate: step 1/9. Required for the first step of histidine biosynthesis. May allow the feedback regulation of ATP phosphoribosyltransferase activity by histidine. In Trichormus variabilis (strain ATCC 29413 / PCC 7937) (Anabaena variabilis), this protein is ATP phosphoribosyltransferase regulatory subunit.